We begin with the raw amino-acid sequence, 474 residues long: Nuclear receptor ROR-alpha B (474 aa).

Residues 14–89 (SIPCKICGDK…VGMSRDAVKF (76 aa)) constitute a DNA-binding region (nuclear receptor). 2 NR C4-type zinc fingers span residues 17-37 (CKICGDKSSGIHYGVITCEGC) and 53-72 (CPRQKSCLIDRTSRNRCQHC). Residues 98–124 (DSLFAEVQKHRQQQQDDKTGDESEKNQ) show a composition bias toward basic and acidic residues. The disordered stretch occupies residues 98 to 144 (DSLFAEVQKHRQQQQDDKTGDESEKNQESQAPGEAEPLTPSYALSSS). The NR LBD domain maps to 223–461 (DLEHLSENIC…TRFPPLYKEL (239 aa)). Residues 450 to 461 (VHTRFPPLYKEL) are AF-2.

Belongs to the nuclear hormone receptor family.

Its subcellular location is the nucleus. In terms of biological role, nuclear receptor that binds DNA as a monomer to ROR response elements (RORE). Required for proper cerebellum development. This chain is Nuclear receptor ROR-alpha B (rorab), found in Danio rerio (Zebrafish).